The sequence spans 691 residues: Penicillin-binding protein 2D (691 aa).

At 1–19 (MDAMTNKRLRLTLKTVRAF) the chain is on the cytoplasmic side. A helical; Signal-anchor for type II membrane protein transmembrane segment spans residues 20-40 (IFLGAFAALAAAAVFMTVILI). Topologically, residues 41-691 (AKYQGAPSVQ…WWDKWLGRHH (651 aa)) are extracellular. Residues 55 to 223 (TILYASDGSK…PSGYSPYVNE (169 aa)) are transglycosylase. Glu-94 acts as the Proton donor; for transglycosylase activity in catalysis. Residues 327 to 605 (VGFSAIDPRT…AKTIWADFME (279 aa)) form a transpeptidase region. The active-site Acyl-ester intermediate; for transpeptidase activity is Ser-365. The interval 663–691 (AKQTKDRLPSKEKPASEKKWWDKWLGRHH) is disordered. Positions 664-691 (KQTKDRLPSKEKPASEKKWWDKWLGRHH) are enriched in basic and acidic residues.

The protein in the N-terminal section; belongs to the glycosyltransferase 51 family. In the C-terminal section; belongs to the transpeptidase family.

It localises to the cell membrane. The catalysed reaction is [GlcNAc-(1-&gt;4)-Mur2Ac(oyl-L-Ala-gamma-D-Glu-L-Lys-D-Ala-D-Ala)](n)-di-trans,octa-cis-undecaprenyl diphosphate + beta-D-GlcNAc-(1-&gt;4)-Mur2Ac(oyl-L-Ala-gamma-D-Glu-L-Lys-D-Ala-D-Ala)-di-trans,octa-cis-undecaprenyl diphosphate = [GlcNAc-(1-&gt;4)-Mur2Ac(oyl-L-Ala-gamma-D-Glu-L-Lys-D-Ala-D-Ala)](n+1)-di-trans,octa-cis-undecaprenyl diphosphate + di-trans,octa-cis-undecaprenyl diphosphate + H(+). It catalyses the reaction Preferential cleavage: (Ac)2-L-Lys-D-Ala-|-D-Ala. Also transpeptidation of peptidyl-alanyl moieties that are N-acyl substituents of D-alanine.. It participates in cell wall biogenesis; peptidoglycan biosynthesis. Involved in the polymerization and cross-linking of spore peptidoglycan. May be required for synthesis of the spore germ cell wall, the first layer of peptidoglycan synthesized on the surface of the inner forespore membrane. The polypeptide is Penicillin-binding protein 2D (pbpG) (Bacillus subtilis (strain 168)).